The sequence spans 864 residues: DNA mismatch repair protein MutS (864 aa).

613–620 contacts ATP; the sequence is GPNMGGKS.

This sequence belongs to the DNA mismatch repair MutS family.

In terms of biological role, this protein is involved in the repair of mismatches in DNA. It is possible that it carries out the mismatch recognition step. This protein has a weak ATPase activity. The polypeptide is DNA mismatch repair protein MutS (Actinobacillus pleuropneumoniae serotype 3 (strain JL03)).